Consider the following 328-residue polypeptide: Phenylalanine--tRNA ligase alpha subunit (328 aa).

Glu-253 serves as a coordination point for Mg(2+).

The protein belongs to the class-II aminoacyl-tRNA synthetase family. Phe-tRNA synthetase alpha subunit type 1 subfamily. Tetramer of two alpha and two beta subunits. Mg(2+) serves as cofactor.

It localises to the cytoplasm. It carries out the reaction tRNA(Phe) + L-phenylalanine + ATP = L-phenylalanyl-tRNA(Phe) + AMP + diphosphate + H(+). The sequence is that of Phenylalanine--tRNA ligase alpha subunit from Actinobacillus pleuropneumoniae serotype 5b (strain L20).